Here is a 181-residue protein sequence, read N- to C-terminus: Large ribosomal subunit protein uL6 (181 aa).

This sequence belongs to the universal ribosomal protein uL6 family. Part of the 50S ribosomal subunit.

Its function is as follows. This protein binds to the 23S rRNA, and is important in its secondary structure. It is located near the subunit interface in the base of the L7/L12 stalk, and near the tRNA binding site of the peptidyltransferase center. This chain is Large ribosomal subunit protein uL6, found in Desulforudis audaxviator (strain MP104C).